Consider the following 465-residue polypeptide: Tetratricopeptide repeat protein 38 (465 aa).

3 TPR repeats span residues 104–137 (REQL…HPTD), 176–209 (SYVK…EPTD), and 248–281 (CHNY…SLQA).

It belongs to the TTC38 family.

The sequence is that of Tetratricopeptide repeat protein 38 (Ttc38) from Mus musculus (Mouse).